The sequence spans 358 residues: Phenylalanine--tRNA ligase alpha subunit (358 aa).

Glu258 lines the Mg(2+) pocket.

It belongs to the class-II aminoacyl-tRNA synthetase family. Phe-tRNA synthetase alpha subunit type 1 subfamily. In terms of assembly, tetramer of two alpha and two beta subunits. The cofactor is Mg(2+).

It is found in the cytoplasm. It carries out the reaction tRNA(Phe) + L-phenylalanine + ATP = L-phenylalanyl-tRNA(Phe) + AMP + diphosphate + H(+). The chain is Phenylalanine--tRNA ligase alpha subunit from Rhodospirillum rubrum (strain ATCC 11170 / ATH 1.1.1 / DSM 467 / LMG 4362 / NCIMB 8255 / S1).